Reading from the N-terminus, the 223-residue chain is UPF0441 protein ETA_04310 (223 aa).

Positions 166 to 223 are disordered; sequence YGAATPGRTMTVPKSALAPKPATTSTVTRGGFGESVAKQNTMQRNSSSTGSANRSMGG. Positions 202-223 are enriched in polar residues; it reads AKQNTMQRNSSSTGSANRSMGG.

Belongs to the UPF0441 family.

This chain is UPF0441 protein ETA_04310, found in Erwinia tasmaniensis (strain DSM 17950 / CFBP 7177 / CIP 109463 / NCPPB 4357 / Et1/99).